Here is a 614-residue protein sequence, read N- to C-terminus: Vitamin B12 transporter BtuB (614 aa).

The first 20 residues, 1 to 20 (MIKKASLLTACSVTAFSAWA), serve as a signal peptide directing secretion. Positions 26–33 (DTLVVTAI) match the TonB box motif. The TBDR plug domain maps to 38–152 (PRSTVLAPTT…IGGVVNIITT (115 aa)). Residues L83, S85, N92, and 110–111 (VS) each bind cyanocob(III)alamin. In terms of domain architecture, TBDR beta-barrel spans 155–614 (EPGTEISAGW…EYTLSGSYTF (460 aa)). The next 3 beta stranded transmembrane spans lie at 158-165 (TEISAGWG), 169-178 (YQNYDVSTQQ), and 184-195 (TRVTLLGDYAHT). Ca(2+) is bound by residues D199, Q211, D213, and D215. 2 beta stranded membrane passes run 217–227 (FLSKTLYGALE) and 232–248 (DAWSGFVRGYGYDNRTN). Ca(2+) is bound by residues Y249 and D250. A251 provides a ligand contact to cyanocob(III)alamin. D261 provides a ligand contact to Ca(2+). 14 beta stranded membrane passes run 263 to 277 (RKLYSQSWDAGLRYN), 279 to 296 (ELIKSQLITSYSHSKDYN), 309 to 325 (TLDEMKQYTVQWANNVI), 328 to 337 (HGSIGAGVDW), 353 to 369 (YDQRNTGIYLTGLQQVG), 371 to 381 (FTFEGAARSDD), 385 to 400 (FGRHGTWQTSAGWEFI), 403 to 417 (YRFIASYGTSYKAPN), 434 to 443 (KSKQWEGAFE), 449 to 458 (VNWRISGYRN), 473 to 490 (YYNEGKARIKGVEATANF), 494 to 509 (PLTHTVSYDYVDARNA), 517 to 529 (RRAKQQVKYQLDW), and 535 to 550 (DWGITYQYLGTRYDKD). T309 provides a ligand contact to cyanocob(III)alamin. R517 contributes to the cyanocob(III)alamin binding site. Y551 contributes to the cyanocob(III)alamin binding site. Transmembrane regions (beta stranded) follow at residues 558 to 572 (TVKMGGVSLWDLAVA), 585 to 596 (IANLFDKDYETV), and 602 to 614 (AGREYTLSGSYTF). Residues 597–614 (YGYQTAGREYTLSGSYTF) carry the TonB C-terminal box motif.

Belongs to the TonB-dependent receptor family. BtuB (TC 1.B.14.3.1) subfamily.

Its subcellular location is the cell outer membrane. Functionally, involved in the active translocation of vitamin B12 (cyanocobalamin) across the outer membrane to the periplasmic space. It derives its energy for transport by interacting with the trans-periplasmic membrane protein TonB. This chain is Vitamin B12 transporter BtuB, found in Shigella flexneri serotype 5b (strain 8401).